The primary structure comprises 191 residues: Ribosome hibernation promotion factor (191 aa).

The disordered stretch occupies residues 100 to 123 (KQRQEGRPEPLPGPAEAEVNAQGS).

It belongs to the HPF/YfiA ribosome-associated protein family. Long HPF subfamily. As to quaternary structure, interacts with 100S ribosomes.

It localises to the cytoplasm. Required for dimerization of active 70S ribosomes into 100S ribosomes in stationary phase; 100S ribosomes are translationally inactive and sometimes present during exponential growth. In Deinococcus radiodurans (strain ATCC 13939 / DSM 20539 / JCM 16871 / CCUG 27074 / LMG 4051 / NBRC 15346 / NCIMB 9279 / VKM B-1422 / R1), this protein is Ribosome hibernation promotion factor.